The primary structure comprises 69 residues: MAMLWISMFIIMRKYGRSSSSSSSSSSSSSSSSSSSSSSSSSSSSSSSSSSSSSSSSGSSSNSNRVVVV.

Residues 1 to 18 (MAMLWISMFIIMRKYGRS) form the signal peptide. The segment at 17–69 (RSSSSSSSSSSSSSSSSSSSSSSSSSSSSSSSSSSSSSSSSGSSSNSNRVVVV) is disordered. Positions 18–61 (SSSSSSSSSSSSSSSSSSSSSSSSSSSSSSSSSSSSSSSSGSSS) are enriched in low complexity.

It localises to the secreted. This is an uncharacterized protein from Dictyostelium discoideum (Social amoeba).